We begin with the raw amino-acid sequence, 125 residues long: Larval cuticle protein LCP-14 (125 aa).

Positions 1 to 16 (MKSFIVALCVVGCVLA) are cleaved as a signal peptide. The Chitin-binding type R&amp;R domain maps to 33–102 (EGSYNYAFES…PQADFLPTPP (70 aa)).

In terms of biological role, component of the cuticle of the larva of tobacco hornworm. This is Larval cuticle protein LCP-14 (LCP-14) from Manduca sexta (Tobacco hawkmoth).